The following is a 110-amino-acid chain: Phosphoribosyl-AMP cyclohydrolase (110 aa).

Asp-80 is a binding site for Mg(2+). Residue Cys-81 coordinates Zn(2+). Mg(2+) contacts are provided by Asp-82 and Asp-84. Residues Cys-97 and Cys-104 each coordinate Zn(2+).

It belongs to the PRA-CH family. As to quaternary structure, homodimer. The cofactor is Mg(2+). Requires Zn(2+) as cofactor.

The protein localises to the cytoplasm. The catalysed reaction is 1-(5-phospho-beta-D-ribosyl)-5'-AMP + H2O = 1-(5-phospho-beta-D-ribosyl)-5-[(5-phospho-beta-D-ribosylamino)methylideneamino]imidazole-4-carboxamide. Its pathway is amino-acid biosynthesis; L-histidine biosynthesis; L-histidine from 5-phospho-alpha-D-ribose 1-diphosphate: step 3/9. Catalyzes the hydrolysis of the adenine ring of phosphoribosyl-AMP. The sequence is that of Phosphoribosyl-AMP cyclohydrolase from Clostridium botulinum (strain Okra / Type B1).